A 117-amino-acid chain; its full sequence is Large ribosomal subunit protein bL19 (117 aa).

Belongs to the bacterial ribosomal protein bL19 family.

In terms of biological role, this protein is located at the 30S-50S ribosomal subunit interface and may play a role in the structure and function of the aminoacyl-tRNA binding site. In Aliivibrio salmonicida (strain LFI1238) (Vibrio salmonicida (strain LFI1238)), this protein is Large ribosomal subunit protein bL19.